We begin with the raw amino-acid sequence, 331 residues long: Ornithine carbamoyltransferase (331 aa).

Carbamoyl phosphate is bound by residues 55–58 (STRT), glutamine 82, arginine 106, and 133–136 (HPTQ). L-ornithine contacts are provided by residues asparagine 166, aspartate 230, and 234-235 (SM). Carbamoyl phosphate is bound by residues 272–273 (CL) and arginine 317.

It belongs to the aspartate/ornithine carbamoyltransferase superfamily. OTCase family.

It is found in the cytoplasm. The enzyme catalyses carbamoyl phosphate + L-ornithine = L-citrulline + phosphate + H(+). It participates in amino-acid biosynthesis; L-arginine biosynthesis; L-arginine from L-ornithine and carbamoyl phosphate: step 1/3. In terms of biological role, reversibly catalyzes the transfer of the carbamoyl group from carbamoyl phosphate (CP) to the N(epsilon) atom of ornithine (ORN) to produce L-citrulline. This Neisseria meningitidis serogroup A / serotype 4A (strain DSM 15465 / Z2491) protein is Ornithine carbamoyltransferase (argF).